A 470-amino-acid chain; its full sequence is MSLFGTNTTSQTPAGGGLFGTTTSQSAQTGSLFGTATSQPQQTGGLFGSTATQTPSSQLQSTGLFGSTTATSQPQQTGGLFGSTTTTTSQPQQTGGLFGATATSQPQSTGGLFGNTTTTSQPAQTVGLFGTTTQPQPAQSGGLFGSATQQKPATGGLFGSTTTNTGAGLFGNTSNTIGGGGLFGQTAKPATGGLFGQSTTQPQQQQNATPGLTMGQSTNTQQQVVPGVRIDLSNIKSTTRFNDLTEALQQEIAKIDEEIQKCIRDKEAVDAFLPAHGEQLAAIPTDVNFVTRKSEGAHNALSSDILAIDQLRELVKQDADNARLSFKAIDNLKLPMQYHQAGLWSKQMGGAGTAGASGASADADGQSNADLISYFSKTADEMEEMMKKFEKTITEIEAHLTGVEAHAMAMQNVAAQSRNAAQGGVDERVYELAAVLREFEESILKVAGVVGGVKEGVTELQLRDFMGHGS.

Residues 1 to 13 (MSLFGTNTTSQTP) are compositionally biased toward polar residues. A disordered region spans residues 1 to 92 (MSLFGTNTTS…STTTTTSQPQ (92 aa)). 12 GLFG repeats span residues 17–20 (GLFG), 45–48 (GLFG), 63–66 (GLFG), 79–82 (GLFG), 96–99 (GLFG), 111–114 (GLFG), 127–130 (GLFG), 142–145 (GLFG), 156–159 (GLFG), 168–171 (GLFG), 181–184 (GLFG), and 193–197 (GLFGQ). Residues 20-31 (GTTTSQSAQTGS) show a composition bias toward low complexity. Positions 32-74 (LFGTATSQPQQTGGLFGSTATQTPSSQLQSTGLFGSTTATSQP) are enriched in polar residues. The span at 75-92 (QQTGGLFGSTTTTTSQPQ) shows a compositional bias: low complexity. Residues 196 to 221 (GQSTTQPQQQQNATPGLTMGQSTNTQ) are disordered. Low complexity predominate over residues 197 to 206 (QSTTQPQQQQ). Residues 207 to 221 (NATPGLTMGQSTNTQ) show a composition bias toward polar residues. 2 coiled-coil regions span residues 239–270 (TRFN…EAVD) and 375–401 (FSKT…AHLT).

This sequence belongs to the nucleoporin GLFG family. In terms of assembly, component of the nuclear pore complex (NPC). NPC constitutes the exclusive means of nucleocytoplasmic transport. NPCs allow the passive diffusion of ions and small molecules and the active, nuclear transport receptor-mediated bidirectional transport of macromolecules such as proteins, RNAs, ribonucleoparticles (RNPs), and ribosomal subunits across the nuclear envelope. Due to its 8-fold rotational symmetry, all subunits are present with 8 copies or multiples thereof.

The protein resides in the nucleus. Its subcellular location is the nuclear pore complex. It localises to the nucleus membrane. Its function is as follows. Functions as a component of the nuclear pore complex (NPC). NPC components, collectively referred to as nucleoporins (NUPs), can play the role of both NPC structural components and of docking or interaction partners for transiently associated nuclear transport factors. Active directional transport is assured by both, a Phe-Gly (FG) repeat affinity gradient for these transport factors across the NPC and a transport cofactor concentration gradient across the nuclear envelope (GSP1 and GSP2 GTPases associated predominantly with GTP in the nucleus, with GDP in the cytoplasm). NUP49 plays an important role in several nuclear transport pathways including poly(A)+ RNA, tRNA, and pre-ribosome transport. This chain is Nucleoporin NUP49 (NUP49), found in Chaetomium thermophilum (strain DSM 1495 / CBS 144.50 / IMI 039719) (Thermochaetoides thermophila).